We begin with the raw amino-acid sequence, 238 residues long: 7-cyano-7-deazaguanine synthase (238 aa).

Phe-12–Leu-22 serves as a coordination point for ATP. Residues Cys-191, Cys-200, Cys-203, and Cys-206 each contribute to the Zn(2+) site.

This sequence belongs to the QueC family. Zn(2+) serves as cofactor.

The enzyme catalyses 7-carboxy-7-deazaguanine + NH4(+) + ATP = 7-cyano-7-deazaguanine + ADP + phosphate + H2O + H(+). It functions in the pathway purine metabolism; 7-cyano-7-deazaguanine biosynthesis. Functionally, catalyzes the ATP-dependent conversion of 7-carboxy-7-deazaguanine (CDG) to 7-cyano-7-deazaguanine (preQ(0)). This Shewanella oneidensis (strain ATCC 700550 / JCM 31522 / CIP 106686 / LMG 19005 / NCIMB 14063 / MR-1) protein is 7-cyano-7-deazaguanine synthase.